Here is a 226-residue protein sequence, read N- to C-terminus: UPF0758 protein M6_Spy0838 (226 aa).

Residues 103-225 (SVLTSVQVAE…YYSFREKSTL (123 aa)) enclose the MPN domain. His174, His176, and Asp187 together coordinate Zn(2+). The JAMM motif motif lies at 174–187 (HNHPSGNIEPSSND).

Belongs to the UPF0758 family.

This is UPF0758 protein M6_Spy0838 from Streptococcus pyogenes serotype M6 (strain ATCC BAA-946 / MGAS10394).